Consider the following 380-residue polypeptide: Maintenance of mitochondrial morphology protein 1 (380 aa).

At 1 to 64 the chain is on the lumenal side; sequence MQGRAIWAEG…IVPSLSFIQG (64 aa). Residues 65–85 traverse the membrane as a helical segment; it reads FMAGQAVLLMLFLGLFRYFFM. Over 86–380 the chain is Cytoplasmic; it reads TSSPGTRAQQ…IGTSPADPLA (295 aa). Residues 147 to 369 enclose the SMP-LTD domain; sequence APESLDWLNV…WPHFWHIPLP (223 aa).

This sequence belongs to the MMM1 family. As to quaternary structure, homodimer. Component of the ER-mitochondria encounter structure (ERMES) or MDM complex, composed of MMM1, MDM10, MDM12 and MDM34. An MMM1 homodimer associates with one molecule of MDM12 on each side in a pairwise head-to-tail manner, and the SMP-LTD domains of MMM1 and MDM12 generate a continuous hydrophobic tunnel for phospholipid trafficking.

The protein localises to the endoplasmic reticulum membrane. Component of the ERMES/MDM complex, which serves as a molecular tether to connect the endoplasmic reticulum (ER) and mitochondria. Components of this complex are involved in the control of mitochondrial shape and protein biogenesis, and function in nonvesicular lipid trafficking between the ER and mitochondria. The MDM12-MMM1 subcomplex functions in the major beta-barrel assembly pathway that is responsible for biogenesis of all outer membrane beta-barrel proteins, and acts in a late step after the SAM complex. The MDM10-MDM12-MMM1 subcomplex further acts in the TOM40-specific pathway after the action of the MDM12-MMM1 complex. Essential for establishing and maintaining the structure of mitochondria and maintenance of mtDNA nucleoids. This Malassezia globosa (strain ATCC MYA-4612 / CBS 7966) (Dandruff-associated fungus) protein is Maintenance of mitochondrial morphology protein 1.